We begin with the raw amino-acid sequence, 439 residues long: Xylose isomerase (439 aa).

Catalysis depends on residues histidine 101 and aspartate 104. Residues glutamate 232, glutamate 268, histidine 271, aspartate 296, aspartate 307, aspartate 309, and aspartate 339 each coordinate Mg(2+).

This sequence belongs to the xylose isomerase family. In terms of assembly, homotetramer. Mg(2+) serves as cofactor.

It is found in the cytoplasm. It carries out the reaction alpha-D-xylose = alpha-D-xylulofuranose. This is Xylose isomerase from Histophilus somni (strain 2336) (Haemophilus somnus).